The chain runs to 578 residues: Penicillin-binding protein activator LpoA (578 aa).

The signal sequence occupies residues 1–30; the sequence is MPTILVQSYGFRQKMKTIFIPTALALLLAA. The N-palmitoyl cysteine moiety is linked to residue Cys-31. Residue Cys-31 is the site of S-diacylglycerol cysteine attachment.

The protein belongs to the LpoA family. Interacts with PBP1a.

Its subcellular location is the cell outer membrane. Its function is as follows. Regulator of peptidoglycan synthesis that is essential for the function of penicillin-binding protein 1A (PBP1a). The chain is Penicillin-binding protein activator LpoA from Glaesserella parasuis serovar 5 (strain SH0165) (Haemophilus parasuis).